Consider the following 542-residue polypeptide: MITPLTQRPAWKALEAHYQTIKGMHLRQLFADDPKRGERFTAEAVGLYLDYSKNRITDETLHLLVQLAEECGLRERIEAMFRGDAINVTEQRAVLHIALRAPRNEKILVDGNDVVPGVHAVLDRMADFSDKIRSGDWQGHTGKRIRNIINIGIGGSDLGPVMAYEALRHYSLHNLSFRFISNVDGTDFVEATRGLDPEETLFIICSKTFTTTETLANAHTARRWMLRQIKDLEGVRKHFVAVSTNAEEVARFGIDTANMFEFWDWVGGRYSMDSAIGLSTMIAVGPENFREMLAGFHAMDQHFYSAPFDRNLPVLMGLLSLWYNNFFGAQTLAVLPYEQYLKRFPAYLQQLTMESNGKHITLNGSQVDYQTSPIVWGEPGTNGQHSFYQLIHQGTRLIPCDFIGFCQTLNPLGDHHDLLMANLFAQTEALAFGKTEDEVKAEGVPDWLCPHRSFEGNRPTNTILAERLTPHTLGALVALYEQSVFTQGTIWQIDSFDQWGVELGKVLAHRIGQELEDENGKSLKHDSSTNALIQRYNRLKQK.

Residue Glu-354 is the Proton donor of the active site. Residues His-385 and Lys-505 contribute to the active site.

This sequence belongs to the GPI family.

The protein resides in the cytoplasm. It carries out the reaction alpha-D-glucose 6-phosphate = beta-D-fructose 6-phosphate. The protein operates within carbohydrate biosynthesis; gluconeogenesis. Its pathway is carbohydrate degradation; glycolysis; D-glyceraldehyde 3-phosphate and glycerone phosphate from D-glucose: step 2/4. In terms of biological role, catalyzes the reversible isomerization of glucose-6-phosphate to fructose-6-phosphate. This chain is Glucose-6-phosphate isomerase, found in Nitrosospira multiformis (strain ATCC 25196 / NCIMB 11849 / C 71).